The sequence spans 431 residues: uncharacterized protein (431 aa).

This is an uncharacterized protein from Caenorhabditis elegans.